The chain runs to 330 residues: AP-1-like transcription factor YAP3 (330 aa).

A disordered region spans residues 114-150 (SYSNTNYFSKNNGISPSSRSPSVAHNENVPDDSKAKK). Polar residues predominate over residues 121–138 (FSKNNGISPSSRSPSVAH). Ser135 carries the phosphoserine modification. The bZIP domain maps to 144–207 (DDSKAKKKAQ…TEINAENRLL (64 aa)). Residues 147-168 (KAKKKAQNRAAQKAFRERKEAR) are basic motif. A leucine-zipper region spans residues 172–207 (LQDKLLESERNRQSLLKEIEELRKANTEINAENRLL).

This sequence belongs to the bZIP family. YAP subfamily. Homodimer. Interacts with the C-terminal, cytoplasmic tail of the multidrug resistance ABC transporter PDR5.

Its subcellular location is the cytoplasm. It localises to the nucleus. In terms of biological role, transcription activator involved in the regulation of genes expressed in response to environmental changes. When overexpressed it activates transcription of the multidrug resistance ABC transporter PDR5, thus conferring resistance to the fungicide fluconazole (FCZ) and cycloheximide. When overexpressed, it also confers, independent of PDR5, increased resistance to 4-nitroquinoline-N-oxide (4-NQO). Preferentially binds 5'-TTACTAA-3'. This is AP-1-like transcription factor YAP3 (YAP3) from Saccharomyces cerevisiae (strain ATCC 204508 / S288c) (Baker's yeast).